The sequence spans 154 residues: UPF0178 protein ABC1688 (154 aa).

This sequence belongs to the UPF0178 family.

The polypeptide is UPF0178 protein ABC1688 (Shouchella clausii (strain KSM-K16) (Alkalihalobacillus clausii)).